The primary structure comprises 952 residues: Eukaryotic initiation factor 4F subunit p150 (952 aa).

Disordered regions lie at residues 1–77 (MTDE…NYNG), 115–389 (GSAP…DAGT), and 481–575 (VIPP…LVPS). The segment covering 7 to 16 (HPTQSASKQE) has biased composition (polar residues). Over residues 29–46 (ESQQQRGYTNYNNGSNYT) the composition is skewed to low complexity. Polar residues predominate over residues 47–56 (QKKPYNSNRP). Positions 65-74 (GPNRYNNRGN) are enriched in low complexity. The segment covering 140–151 (SGEHLDLKEQHK) has biased composition (basic and acidic residues). Over residues 154–166 (LQSQERSTVSPQP) the composition is skewed to polar residues. A Phosphoserine modification is found at Ser163. Residues 175 to 191 (DSTSTSTPTPTPSTNDS) are compositionally biased toward low complexity. A Phosphothreonine modification is found at Thr181. The interaction with PAB1 stretch occupies residues 188-299 (TNDSKASSEE…KEESTPKVLT (112 aa)). Ser195 is subject to Phosphoserine. Residues 218–228 (AALEKKRKEQL) show a composition bias toward basic and acidic residues. The span at 229–244 (EGSSGNNNIPMKTTPE) shows a compositional bias: polar residues. Composition is skewed to basic and acidic residues over residues 246–276 (VEEK…KQET), 283–294 (QGEKGQIKEEST), and 309–333 (QQKE…ETKS). The span at 355 to 368 (TEQSNIDESATTPA) shows a compositional bias: polar residues. Ser503 carries the phosphoserine modification. Composition is skewed to basic and acidic residues over residues 504 to 521 (RGHD…DRAN) and 532 to 569 (RMND…KEEV). Residues 607–850 (ERKMKSLLNK…IDIKELRHDK (244 aa)) enclose the MIF4G domain. The interval 870–952 (EEERQRQLKN…ALMGESDDEE (83 aa)) is disordered. Residues 879 to 894 (NNSRSNSRRTNNSSNR) are compositionally biased toward low complexity. The residue at position 883 (Ser883) is a Phosphoserine. Thr888 bears the Phosphothreonine mark. Phosphoserine occurs at positions 892, 896, 908, and 948. Residues 908–922 (SFITTRTYSQRNSQR) are compositionally biased toward polar residues.

The protein belongs to the eukaryotic initiation factor 4G family. As to quaternary structure, component of the eIF4F complex, which composition varies with external and internal environmental conditions. It is composed of at least eIF4A (TIF1/TIF2), eIF4E (TIF45) and eIF4G (TIF4631 or TIF4632). Interacts with PAT1 in a RNA-dependent manner.

The protein resides in the cytoplasm. Its subcellular location is the P-body. The protein localises to the stress granule. In terms of biological role, component of the eIF4F complex, which interacts with the mRNA cap structure and serves as an initial point of assembly for the translation apparatus. Stimulates translation by interaction with polyadenylate-binding protein PAB1, bringing the 5'- and 3'-ends of the mRNA in proximity. The formation of this circular mRNP structure appears to be critical for the synergistic effects of the cap and the poly(A) tail in facilitating translation initiation, recycling of ribosomes, and mRNA stability. TIF4631 is probably essential when TIF4632 is missing. This chain is Eukaryotic initiation factor 4F subunit p150, found in Saccharomyces cerevisiae (strain ATCC 204508 / S288c) (Baker's yeast).